Consider the following 308-residue polypeptide: MTKRKHVAVLLGGWSSEREVSLRSGNACADALERRGFEVTRIDVARDIATVLDQLRPDSALMMLHGHPGEDGSIQGVLETLAIPYSHSGVLASALAMQKDLAKTVMKTAGVPVAEGLTLSRDEIARGHVMEPPYVIKPVADGSSVGVYIITEQHQHPPQELFRDDWAYGDKLLVEKYVAGKELTCAVVKGEPTDVIEIVPMVRFYDYEAKYSPGASKHVLPASLLPFVYQEVRRLTLAAHVALGCRGVSRADFRFDDRIEGTGGLVCLEVNTQPGMTETSLVPELAAYAGITFDELVQWMVEDASLDR.

In terms of domain architecture, ATP-grasp spans K103–E302. ATP is bound at residue M130 to T184. 3 residues coordinate Mg(2+): D252, E269, and N271.

Belongs to the D-alanine--D-alanine ligase family. Mg(2+) is required as a cofactor. The cofactor is Mn(2+).

Its subcellular location is the cytoplasm. It catalyses the reaction 2 D-alanine + ATP = D-alanyl-D-alanine + ADP + phosphate + H(+). It participates in cell wall biogenesis; peptidoglycan biosynthesis. Its function is as follows. Cell wall formation. The polypeptide is D-alanine--D-alanine ligase (Rhodopseudomonas palustris (strain BisA53)).